The sequence spans 185 residues: MIDEIELDAQERMEKSLVALKGQFSKIRTGRAHPSLLDGIMVPYYGVDTPLKQVANVVAEDSRTLALTVFDKSAIQAVEKAIMQSDLGLNPMSAGGSIRIPLPPLTEERRKDLIRVVRNEAEGGRVAIRNIRRDANGDVKDLLKEKEISEDESRAAEENIQSITNEFIKKVDSLLADKEKELMEV.

This sequence belongs to the RRF family.

The protein localises to the cytoplasm. Responsible for the release of ribosomes from messenger RNA at the termination of protein biosynthesis. May increase the efficiency of translation by recycling ribosomes from one round of translation to another. This is Ribosome-recycling factor from Alteromonas mediterranea (strain DSM 17117 / CIP 110805 / LMG 28347 / Deep ecotype).